We begin with the raw amino-acid sequence, 150 residues long: UPF0756 membrane protein ABAYE1440 (150 aa).

Helical transmembrane passes span 1-21 (MLAQ…CGLL), 45-65 (FFPY…TIGV), 83-103 (FISF…WLGG), and 115-135 (VVAG…GVPV).

Belongs to the UPF0756 family.

It localises to the cell membrane. This Acinetobacter baumannii (strain AYE) protein is UPF0756 membrane protein ABAYE1440.